The following is a 727-amino-acid chain: Anaphase-promoting complex subunit 5 (727 aa).

Ser180 is subject to Phosphoserine. 13 TPR repeats span residues 194 to 234 (QKQA…FNPD), 235 to 285 (FAEA…GRSL), 286 to 322 (RYAALNLAALHCRFGHYQQAELALQEAIRIAQESNDH), 323 to 359 (VCLQHCLSWLYVLGQKRADSYVLLEHSVKKAVHFGLP), 360 to 390 (RAFAGKTANKLMDALKDSDLLHWKHSLSELI), 391 to 438 (DISI…TESF), 439 to 472 (AVALCHLAELHAEQGCFAAAGEVLKHLKERFPPN), 473 to 512 (SQHAQLWMLCDQKIQFDRAMNDGKFHLADSLVTGITALNG), 513 to 552 (IEGVYRKAVVLQAQNQMTEAHKLLQKLLTYCQKLKNTEMV), 553 to 592 (ISVLLSVAELYWRSSSPTIAMPVLLEALALSKEYRLQYLA), 593 to 632 (SETVLNLAYAQLILGIPEQALTLLHMAIEPILADGAILDK), 633 to 668 (GRAMFLVSKCQVASAASYDPVKKAEALEAAIQNLTE), and 669 to 708 (AKNYFAKVDCRERIRDVSYFQARLYHALGKTQERNHCAMV). Residue Thr217 is modified to Phosphothreonine.

The protein belongs to the APC5 family. As to quaternary structure, the mammalian APC/C is composed at least of 14 distinct subunits ANAPC1, ANAPC2, CDC27/APC3, ANAPC4, ANAPC5, CDC16/APC6, ANAPC7, CDC23/APC8, ANAPC10, ANAPC11, CDC26/APC12, ANAPC13, ANAPC15 and ANAPC16 that assemble into a complex of at least 19 chains with a combined molecular mass of around 1.2 MDa; APC/C interacts with FZR1 and FBXO5.

It is found in the nucleus. It localises to the cytoplasm. The protein resides in the cytoskeleton. Its subcellular location is the spindle. The protein operates within protein modification; protein ubiquitination. Its function is as follows. Component of the anaphase promoting complex/cyclosome (APC/C), a cell cycle-regulated E3 ubiquitin ligase that controls progression through mitosis and the G1 phase of the cell cycle. The APC/C complex acts by mediating ubiquitination and subsequent degradation of target proteins: it mainly mediates the formation of 'Lys-11'-linked polyubiquitin chains and, to a lower extent, the formation of 'Lys-48'- and 'Lys-63'-linked polyubiquitin chains. The APC/C complex catalyzes assembly of branched 'Lys-11'-/'Lys-48'-linked branched ubiquitin chains on target proteins. The protein is Anaphase-promoting complex subunit 5 (Anapc5) of Rattus norvegicus (Rat).